The chain runs to 126 residues: Holo-[acyl-carrier-protein] synthase (126 aa).

Residues Asp-8 and Glu-60 each contribute to the Mg(2+) site.

It belongs to the P-Pant transferase superfamily. AcpS family. Mg(2+) serves as cofactor.

The protein localises to the cytoplasm. The enzyme catalyses apo-[ACP] + CoA = holo-[ACP] + adenosine 3',5'-bisphosphate + H(+). Transfers the 4'-phosphopantetheine moiety from coenzyme A to a Ser of acyl-carrier-protein. This is Holo-[acyl-carrier-protein] synthase from Ehrlichia canis (strain Jake).